Consider the following 248-residue polypeptide: 2,3-bisphosphoglycerate-dependent phosphoglycerate mutase (248 aa).

Substrate contacts are provided by residues 8–15 (RHGESTWN), 21–22 (TG), Arg-60, 87–90 (ERHY), Lys-98, 114–115 (RR), and 183–184 (GN). The active-site Tele-phosphohistidine intermediate is His-9. The active-site Proton donor/acceptor is the Glu-87.

It belongs to the phosphoglycerate mutase family. BPG-dependent PGAM subfamily. As to quaternary structure, homodimer.

It carries out the reaction (2R)-2-phosphoglycerate = (2R)-3-phosphoglycerate. It functions in the pathway carbohydrate degradation; glycolysis; pyruvate from D-glyceraldehyde 3-phosphate: step 3/5. Its function is as follows. Catalyzes the interconversion of 2-phosphoglycerate and 3-phosphoglycerate. The protein is 2,3-bisphosphoglycerate-dependent phosphoglycerate mutase of Cupriavidus pinatubonensis (strain JMP 134 / LMG 1197) (Cupriavidus necator (strain JMP 134)).